A 2310-amino-acid chain; its full sequence is Transcription initiation factor TFIID subunit 1 (2310 aa).

Residues 80-150 (DYEDIDEVAE…ERRKQRKQVG (71 aa)) adopt a coiled-coil conformation. Disordered regions lie at residues 115-284 (QQQH…TMKA), 330-352 (KFPD…QTLN), 395-421 (NAGI…TPTL), 521-587 (PNLN…NSSK), 602-686 (DTDS…KQNN), 755-778 (KEHN…KSKK), 802-862 (AANG…NGST), 937-968 (GHNM…HKSD), 1417-1494 (LFGD…AKAK), 1558-1616 (QKKK…SSIG), and 1648-2111 (NNNF…KDGS). Basic and acidic residues predominate over residues 117–129 (QHKEREEQQRLKL). Over residues 140–149 (KERRKQRKQV) the composition is skewed to basic residues. The segment covering 164 to 174 (DDFDFDEEEEQ) has biased composition (acidic residues). A compositionally biased stretch (low complexity) spans 191 to 248 (SSASSLSSSSASSSASSSRSPSMSRSASDIESDSMSDSSRSSGSSISSRSSISSSSSR). Residues 254 to 265 (DGGGGGGGGGGG) are compositionally biased toward gly residues. A compositionally biased stretch (basic residues) spans 266–281 (SHRRRHKEKKPKKKVT). 2 stretches are compositionally biased toward low complexity: residues 411–421 (LTSSNTTTPTL) and 524–587 (NKNS…NSSK). A compositionally biased stretch (polar residues) spans 603–614 (TDSQNLLQQPLS). Residues 615-630 (QEKDKEKEKDKDKAQN) are compositionally biased toward basic and acidic residues. Residues 639 to 685 (NNKKNSTTNNNNLTNNNGNNNNTNNNNNNSNNNSNNNNNNNNNNKQN) show a composition bias toward low complexity. Residues 809 to 846 (SFEEQLQKDKEEDERKEREEREQSQREIDKFNLSNDKF) are a coiled coil. The span at 813–838 (QLQKDKEEDERKEREEREQSQREIDK) shows a compositional bias: basic and acidic residues. 2 stretches are compositionally biased toward low complexity: residues 950–961 (SSSSSSSSSSSK) and 1421–1449 (SNQS…SSKS). Coiled-coil stretches lie at residues 1422–1522 (NQSQ…DLTQ) and 1574–1604 (KQNE…QRED). Residues 1462–1473 (ESDEEEDNEEEE) are compositionally biased toward acidic residues. Basic and acidic residues-rich tracts occupy residues 1481-1494 (KNKD…AKAK), 1563-1576 (DQFL…GKQN), and 1588-1605 (RIQE…REDS). A compositionally biased stretch (polar residues) spans 1606–1616 (FNMNSSNSSIG). Low complexity-rich tracts occupy residues 1648-1659 (NNNFSLNTSSSN), 1667-1682 (SSSS…NNSN), and 1700-1730 (NSDS…SGHP). 2 stretches are compositionally biased toward basic and acidic residues: residues 1731 to 1773 (RSSD…GEHS) and 1780 to 1874 (EHRS…ERSR). Low complexity-rich tracts occupy residues 1895–2023 (STGS…NSTN) and 2038–2053 (NGSN…GGNN). Residues 1946–2004 (NNNNNNNNNNINNNNNNNNNINNINNNNNNNINNINNNYNNNNNNNNNNNNNNNNNNNN) are a coiled coil. A compositionally biased stretch (polar residues) spans 2058–2072 (QSVLNTPLSASSSGS). Residues 2082-2091 (SNSESPSLSS) show a composition bias toward low complexity. Positions 2096-2111 (GSDKSSRRNRVRKDGS) are enriched in basic and acidic residues. The 95-residue stretch at 2123–2217 (RILDKLRTND…TSTLQLLAPF (95 aa)) folds into the Bromo domain. Residues 2244-2289 (VDHTNGSTPSTPITLNTPITPNLPSNSPFFPPVDPPSKAHHSAEDE) are disordered. The segment covering 2250–2271 (STPSTPITLNTPITPNLPSNSP) has biased composition (low complexity).

Belongs to the TAF1 family.

The protein localises to the nucleus. Its function is as follows. May be a component of the TFIID basal transcription factor complex. The protein is Transcription initiation factor TFIID subunit 1 (taf1) of Dictyostelium discoideum (Social amoeba).